Reading from the N-terminus, the 381-residue chain is Flagellar P-ring protein (381 aa).

An N-terminal signal peptide occupies residues 1 to 33; the sequence is MQFFNTLHPTRPHWLLAALCLIASLLGAGTAQA.

Belongs to the FlgI family. As to quaternary structure, the basal body constitutes a major portion of the flagellar organelle and consists of four rings (L,P,S, and M) mounted on a central rod.

Its subcellular location is the periplasm. The protein resides in the bacterial flagellum basal body. Assembles around the rod to form the L-ring and probably protects the motor/basal body from shearing forces during rotation. This Albidiferax ferrireducens (strain ATCC BAA-621 / DSM 15236 / T118) (Rhodoferax ferrireducens) protein is Flagellar P-ring protein.